The primary structure comprises 309 residues: Phytoene synthase (309 aa).

This sequence belongs to the phytoene/squalene synthase family. Requires ATP as cofactor. Mn(2+) serves as cofactor. Mg(2+) is required as a cofactor.

Its pathway is carotenoid biosynthesis; phytoene biosynthesis. In terms of biological role, involved in the biosynthesis of carotenoids. Catalyzes the condensation of two molecules of geranylgeranyl diphosphate (GGPP) to give prephytoene diphosphate (PPPP) and the subsequent rearrangement of the cyclopropylcarbinyl intermediate to yield phytoene. The polypeptide is Phytoene synthase (crtB) (Pseudescherichia vulneris (Escherichia vulneris)).